A 309-amino-acid chain; its full sequence is Taste receptor type 2 member 46 (309 aa).

A topological domain (extracellular) is located at residue Met1. A helical membrane pass occupies residues 2 to 22 (ITFLPIIFSILIVVTFVIGNF). The Cytoplasmic portion of the chain corresponds to 23 to 46 (ANGFIALANSIEWFKRQKISFADQ). The chain crosses the membrane as a helical span at residues 47 to 67 (ILTALAVSRVGLLWVLLLNWY). Over 68–86 (ATELNPAFYSIEVRITAYN) the chain is Extracellular. Residues 87–107 (VWAVISHFSNWLATSLSIFYL) form a helical membrane-spanning segment. The Cytoplasmic portion of the chain corresponds to 108–126 (LKIANFSNLIFLRLKRRVK). A helical membrane pass occupies residues 127–147 (SVVLVILLGPLLFLVCHLFVI). The Extracellular portion of the chain corresponds to 148–178 (NMNQIIWTKEYEGNMTWKIKLRSAMYLSDTT). Residue Asn161 is glycosylated (N-linked (GlcNAc...) asparagine). A helical membrane pass occupies residues 179-199 (VTILANLVPFTLTLISFLLLI). At 200–229 (CSLCKHLKKMQLHGKGSQDPSMKVHIKALQ) the chain is on the cytoplasmic side. Residues 230–250 (TVTSFLLLCAIYFLSVIMSVW) form a helical membrane-spanning segment. At 251-259 (SFESLENKP) the chain is on the extracellular side. Residues 260–280 (VFMFCEAITFSYPSTHPFILI) form a helical membrane-spanning segment. At 281 to 309 (WGNKKLKQTFLSVLWHVRYWVKGEKPSSS) the chain is on the cytoplasmic side.

Belongs to the G-protein coupled receptor T2R family.

The protein localises to the membrane. Its subcellular location is the cell projection. It is found in the cilium membrane. Its function is as follows. Receptor that may play a role in the perception of bitterness and is gustducin-linked. May play a role in sensing the chemical composition of the gastrointestinal content. The activity of this receptor may stimulate alpha gustducin, mediate PLC-beta-2 activation and lead to the gating of TRPM5. In airway epithelial cells, binding of bitter compounds increases the intracellular calcium ion concentration and stimulates ciliary beat frequency. The polypeptide is Taste receptor type 2 member 46 (TAS2R46) (Gorilla gorilla gorilla (Western lowland gorilla)).